Reading from the N-terminus, the 519-residue chain is Cyclic AMP-responsive element-binding protein 3-like protein 2 (519 aa).

Residues 1–374 (MEIMDSGEPF…SCRVTGTQTS (374 aa)) are Cytoplasmic-facing. 3 disordered regions span residues 58 to 77 (GRGD…PVPP), 85 to 121 (YSLC…MEQE), and 193 to 261 (GLEC…SGPL). Residues 109–119 (ADSESDEWPME) show a composition bias toward acidic residues. Composition is skewed to low complexity over residues 205-217 (SSVG…SQSP) and 240-249 (PSSLSSSPLL). One can recognise a bZIP domain in the interval 291 to 354 (ALKKIRRKIK…KSLLQQLHSL (64 aa)). The tract at residues 293–322 (KKIRRKIKNKISAQESRRKKKEYVDALEKK) is basic motif. Positions 333 to 354 (LRRKVENLECTNKSLLQQLHSL) are leucine-zipper. Residues 375–395 (TCLMVVVLCFSLFLGSFYPGL) traverse the membrane as a helical; Signal-anchor for type II membrane protein segment. Residues 396-519 (SPCSSITKAD…QLDRTVNETS (124 aa)) lie on the Lumenal side of the membrane. An S1P recognition motif is present at residues 423-426 (RSLL). N-linked (GlcNAc...) asparagine glycosylation is found at N485, N503, and N516.

The protein belongs to the bZIP family. ATF subfamily. In terms of assembly, binds DNA as a dimer. Post-translationally, upon ER stress, translocated to the Golgi apparatus, where it is processed by regulated intramembrane proteolysis (RIP) to release the cytosol-facing N-terminal transcription factor domain. The cleavage is performed sequentially by site-1 and site-2 proteases (S1P/mbtps1 and S2P/mbtps2).

The protein localises to the endoplasmic reticulum membrane. The protein resides in the nucleus. In terms of biological role, transcription factor involved in unfolded protein response (UPR). In the absence of endoplasmic reticulum (ER) stress, inserted into ER membranes, with N-terminal DNA-binding and transcription activation domains oriented toward the cytosolic face of the membrane. In response to ER stress, transported to the Golgi, where it is cleaved in a site-specific manner by resident proteases S1P/mbtps1 and S2P/mbtps2. The released N-terminal cytosolic domain is translocated to the nucleus to effect transcription of specific target genes. Plays a critical role in chondrogenesis. May protect neuroblastoma cells from ER stress-induced death. In vitro activates transcription of target genes via direct binding to the CRE site. This is Cyclic AMP-responsive element-binding protein 3-like protein 2 (creb3l2) from Danio rerio (Zebrafish).